A 679-amino-acid polypeptide reads, in one-letter code: MSEPRKILVTSALPYANGSIHLGHMLEYIQTDMWVRFQKMRGNQAIYVCADDAHGSAIMLRAEREGITSEQLIDAVRAEHMGDFADFLVDFDNYHSTHSEENRELSSAIYLKLREAGHIDTRPVTQYFDPDKQMFLADRFIKGTCPKCGTADQYGDNCEACGATYAPTELKDPKSAISGATPVLKESLHYFFKLPDFEAMLKQWTRSGALQESVANKLAEWLDSGLQQWDISRDAPYFGFEIPDAPGKYFYVWLDAPIGYMASFRNLCARRPELDFDAFWGKDSGAELYHFIGKDIVNFHALFWPAMLEGAGYRKPTALNVHGYLTVNGQKMSKSRGTFVKARTYLDHLDPEYLRYYYASKLGRGVEDLDLNLEDFVQKVNSDLVGKVVNIASRCAGFIHKGNAGVLVGADPAPELLAAFREAAPGIAEAYEARDFNRAMREIMALADRANAWIAEQAPWALAKQEGQQDKVQAVCGLGINLFRQLVIFLKPVLPKLAAAAEAFLNVAPLTWADHQTLLANHQLNPFQPLMTRIEPAKVEAMIEASKEDLAAAAASQPAGNGELVKEPIAAEIDFDAFAAVDLRIALIEKCEFVEGADKLLRLSLDIGDAKRNVFSGIKSAYPDPSALEGRLTLYVANLAPRKMKFGVSEGMVLAAGPGGEEIYLLSPDSGAKPGQRVK.

The 'HIGH' region motif lies at 14 to 24 (PYANGSIHLGH). 4 residues coordinate Zn(2+): cysteine 145, cysteine 148, cysteine 158, and cysteine 161. The 'KMSKS' region signature appears at 331 to 335 (KMSKS). ATP is bound at residue lysine 334. In terms of domain architecture, tRNA-binding spans 577–679 (AFAAVDLRIA…SGAKPGQRVK (103 aa)).

Belongs to the class-I aminoacyl-tRNA synthetase family. MetG type 1 subfamily. Homodimer. Zn(2+) serves as cofactor.

The protein resides in the cytoplasm. The enzyme catalyses tRNA(Met) + L-methionine + ATP = L-methionyl-tRNA(Met) + AMP + diphosphate. Functionally, is required not only for elongation of protein synthesis but also for the initiation of all mRNA translation through initiator tRNA(fMet) aminoacylation. This is Methionine--tRNA ligase from Pseudomonas paraeruginosa (strain DSM 24068 / PA7) (Pseudomonas aeruginosa (strain PA7)).